Reading from the N-terminus, the 189-residue chain is Peptidyl-tRNA hydrolase (189 aa).

A tRNA-binding site is contributed by Y15. Catalysis depends on H20, which acts as the Proton acceptor. TRNA is bound by residues F66, N68, and N114.

Belongs to the PTH family. As to quaternary structure, monomer.

It localises to the cytoplasm. The enzyme catalyses an N-acyl-L-alpha-aminoacyl-tRNA + H2O = an N-acyl-L-amino acid + a tRNA + H(+). In terms of biological role, hydrolyzes ribosome-free peptidyl-tRNAs (with 1 or more amino acids incorporated), which drop off the ribosome during protein synthesis, or as a result of ribosome stalling. Its function is as follows. Catalyzes the release of premature peptidyl moieties from peptidyl-tRNA molecules trapped in stalled 50S ribosomal subunits, and thus maintains levels of free tRNAs and 50S ribosomes. The polypeptide is Peptidyl-tRNA hydrolase (Streptococcus pyogenes serotype M1).